The sequence spans 367 residues: Anhydro-N-acetylmuramic acid kinase (367 aa).

11-18 (GTSLDGVD) is a binding site for ATP.

The protein belongs to the anhydro-N-acetylmuramic acid kinase family.

The enzyme catalyses 1,6-anhydro-N-acetyl-beta-muramate + ATP + H2O = N-acetyl-D-muramate 6-phosphate + ADP + H(+). The protein operates within amino-sugar metabolism; 1,6-anhydro-N-acetylmuramate degradation. It functions in the pathway cell wall biogenesis; peptidoglycan recycling. In terms of biological role, catalyzes the specific phosphorylation of 1,6-anhydro-N-acetylmuramic acid (anhMurNAc) with the simultaneous cleavage of the 1,6-anhydro ring, generating MurNAc-6-P. Is required for the utilization of anhMurNAc either imported from the medium or derived from its own cell wall murein, and thus plays a role in cell wall recycling. This Rhodopseudomonas palustris (strain ATCC BAA-98 / CGA009) protein is Anhydro-N-acetylmuramic acid kinase.